A 200-amino-acid polypeptide reads, in one-letter code: Holliday junction branch migration complex subunit RuvA (200 aa).

The segment at 1–64 (MFAYFRGKLT…EDLLQLYGFS (64 aa)) is domain I. A domain II region spans residues 65-143 (GEEERQLFRL…KLSPVSALAS (79 aa)). The flexible linker stretch occupies residues 144 to 154 (PARLSSTLLRD). The tract at residues 154–200 (DDAVNALVTLGFSRIIVQKAVVAILEQNPGLTVEEVIKAALVSIHNS) is domain III.

Belongs to the RuvA family. In terms of assembly, homotetramer. Forms an RuvA(8)-RuvB(12)-Holliday junction (HJ) complex. HJ DNA is sandwiched between 2 RuvA tetramers; dsDNA enters through RuvA and exits via RuvB. An RuvB hexamer assembles on each DNA strand where it exits the tetramer. Each RuvB hexamer is contacted by two RuvA subunits (via domain III) on 2 adjacent RuvB subunits; this complex drives branch migration. In the full resolvosome a probable DNA-RuvA(4)-RuvB(12)-RuvC(2) complex forms which resolves the HJ.

It localises to the cytoplasm. In terms of biological role, the RuvA-RuvB-RuvC complex processes Holliday junction (HJ) DNA during genetic recombination and DNA repair, while the RuvA-RuvB complex plays an important role in the rescue of blocked DNA replication forks via replication fork reversal (RFR). RuvA specifically binds to HJ cruciform DNA, conferring on it an open structure. The RuvB hexamer acts as an ATP-dependent pump, pulling dsDNA into and through the RuvAB complex. HJ branch migration allows RuvC to scan DNA until it finds its consensus sequence, where it cleaves and resolves the cruciform DNA. The chain is Holliday junction branch migration complex subunit RuvA from Pelodictyon phaeoclathratiforme (strain DSM 5477 / BU-1).